Reading from the N-terminus, the 1091-residue chain is E3 ubiquitin-protein ligase TRIM33 (1091 aa).

Residues 1–13 (MADNKGGGGGGGE) show a composition bias toward gly residues. Residues 1-87 (MADNKGGGGG…SATPASSSSS (87 aa)) form a disordered region. Residues 52-87 (APVAAVPTDTPAEENPAPSSSSVASSSATPASSSSS) are compositionally biased toward low complexity. The RING-type 1 zinc finger occupies 97–154 (CAVCKLSLQSRDTEPKLLPCLHSFCRRCLPEPERQLSVPGGTNGDIQQVGVIRCLVCR). The segment at 180–227 (KSEQVCTSCEDNASAVGFCVECGEWLCKTCIEAHQRVKFTKDHIITNK) adopts a B box-type 1; atypical zinc-finger fold. Zn(2+) contacts are provided by Cys-185, Cys-188, Cys-209, His-213, Cys-245, His-248, Cys-268, and His-273. Residues 240–281 (QRPVFCPVHKQEQLKLFCETCDRLTCRDCQLLEHKEHRYQFL) form a B box-type 2 zinc finger. Residues 269 to 361 (QLLEHKEHRY…QLESVTKERQ (93 aa)) adopt a coiled-coil conformation. Disordered regions lie at residues 672–779 (LPQP…TPPL) and 821–844 (GKSAVRNSMHRPPRGGGGGDGSNK). Residues 675-721 (PTSNMNPSPAPSAMSPGSTGLSNSHTPVRPPSTSSTGSRGSCGSSSR) are compositionally biased toward low complexity. The span at 754–763 (KQEKAEDGRR) shows a compositional bias: basic and acidic residues. Low complexity predominate over residues 768–779 (LSSPESSLTPPL). The PHD-type zinc finger occupies 850-897 (EDWCAVCQNGGDLLCCEKCPKVFHLTCHVPTLLSFPSGEWICTFCRDL). Residues 920–1043 (GLSPVDQMKC…LYFEEKLPAI (124 aa)) form the Bromo domain. The segment at 1051 to 1091 (PLPEFEAEDDDGDVTDDSDDDDFVQPRRKRLKSEERPVHIK) is disordered. Residues 1055–1073 (FEAEDDDGDVTDDSDDDDF) show a composition bias toward acidic residues. The span at 1082–1091 (KSEERPVHIK) shows a compositional bias: basic and acidic residues.

As to quaternary structure, may interact with smad4.

The protein localises to the nucleus. It carries out the reaction S-ubiquitinyl-[E2 ubiquitin-conjugating enzyme]-L-cysteine + [acceptor protein]-L-lysine = [E2 ubiquitin-conjugating enzyme]-L-cysteine + N(6)-ubiquitinyl-[acceptor protein]-L-lysine.. It participates in protein modification; protein ubiquitination. Functionally, acts as an E3 ubiquitin-protein ligase for smad4. Promotes ectoderm embryonic development at the expense of other germ layers. Inhibits mesodermal differentiation. Promotes neural development of the ectoderm. Promotes smad4 alpha degradation via the ubiquitin proteasome pathway. May act as a transcriptional repressor. The sequence is that of E3 ubiquitin-protein ligase TRIM33 (trim33) from Xenopus laevis (African clawed frog).